The following is a 74-amino-acid chain: Large ribosomal subunit protein bL31 (74 aa).

Zn(2+) is bound by residues Cys-16, Cys-18, Cys-38, and Cys-41.

This sequence belongs to the bacterial ribosomal protein bL31 family. Type A subfamily. In terms of assembly, part of the 50S ribosomal subunit. The cofactor is Zn(2+).

Functionally, binds the 23S rRNA. The sequence is that of Large ribosomal subunit protein bL31 from Acinetobacter baumannii (strain AB307-0294).